The following is a 393-amino-acid chain: MDENESNQSLMTSSQYPKEAVRKRQNSARNSGGSDSSRFSRKSFKLDYRLEEDVTKSKKGKDGRFVNPWPTWKNHSIPHVLRWLIMEKDHSSVPSSKEELDKELPVLKPYFITNPEEAGVRETGLRVTWLGHATVMVEMDELIFLTDPIFSSRASPSQYMGPKRFRRSPCTISELPPIDAVLISHNHYDHLDYNSVIALNERFGNELRWFVPLGLLDWMQKCGCENVIELDWWEENCVPGHDKVTFVFTPSQHWCKRTLMDDNKVLWGSWSVLGPWNRFFFAGDTGYCPAFEEIGKRFGPFDLAAIPIGAYEPRRFMKYQHVDPEEAVRIHIDVQTKKSMAIHWGTFALANEHYLEPPVKLNEALERYGLNAEDFFVLKHGESRYLNTDDENF.

Position 1 is an N-acetylmethionine (Met1). The segment covering 1-16 (MDENESNQSLMTSSQY) has biased composition (polar residues). Residues 1 to 40 (MDENESNQSLMTSSQYPKEAVRKRQNSARNSGGSDSSRFS) are disordered. The Zn(2+) site is built by His185 and His187. Tyr188 contributes to the an N-acyl-1,2-diacyl-sn-glycero-3-phosphoethanolamine binding site. Zn(2+) contacts are provided by Asp189, His190, and His253. Residues Lys256 and Met260 each contribute to the deoxycholate site. Position 284 (Asp284) interacts with Zn(2+). His321 contacts an N-acyl-1,2-diacyl-sn-glycero-3-phosphoethanolamine. His343 provides a ligand contact to Zn(2+). Ala348 is a deoxycholate binding site.

The protein belongs to the NAPE-PLD family. As to quaternary structure, homodimer. Bile acids promote the assembly of inactive monomers into an active dimer and enable catalysis. Zn(2+) is required as a cofactor. In terms of tissue distribution, widely expressed. Highest expression in brain, kidney and testis (at protein level). Expressed in adipose tissue (at protein level).

It is found in the golgi apparatus membrane. Its subcellular location is the early endosome membrane. The protein resides in the nucleus envelope. It localises to the nucleus. The protein localises to the nucleoplasm. It catalyses the reaction an N-acyl-1,2-diacyl-sn-glycero-3-phosphoethanolamine + H2O = an N-acylethanolamine + a 1,2-diacyl-sn-glycero-3-phosphate + H(+). It carries out the reaction N-butanoyl-1-hexadecanoyl-2-(9Z,12Z-octadecadienoyl)-sn-glycero-3-phosphoethanolamine + H2O = N-butanoyl ethanolamine + 1-hexadecanoyl-2-(9Z,12Z-octadecadienoyl)-sn-glycero-3-phosphate + H(+). The catalysed reaction is N-hexanoyl-1-hexadecanoyl-2-(9Z,12Z-octadecadienoyl)-sn-glycero-3-phosphoethanolamine + H2O = N-hexanoyl ethanolamine + 1-hexadecanoyl-2-(9Z,12Z-octadecadienoyl)-sn-glycero-3-phosphate + H(+). The enzyme catalyses N-octanoyl-1-hexadecanoyl-2-(9Z,12Z-octadecadienoyl)-sn-glycero-3-phosphoethanolamine + H2O = N-octanoyl ethanolamine + 1-hexadecanoyl-2-(9Z,12Z-octadecadienoyl)-sn-glycero-3-phosphate + H(+). It catalyses the reaction N-decanoyl-1-hexadecanoyl-2-(9Z,12Z-octadecadienoyl)-sn-glycero-3-phosphoethanolamine + H2O = N-decanoyl ethanolamine + 1-hexadecanoyl-2-(9Z,12Z-octadecadienoyl)-sn-glycero-3-phosphate + H(+). It carries out the reaction N-dodecanoyl-1,2-di-(9Z-octadecenoyl)-sn-glycero-3-phosphoethanolamine + H2O = N-dodecanoylethanolamine + 1,2-di-(9Z-octadecenoyl)-sn-glycero-3-phosphate + H(+). The catalysed reaction is N-tetradecanoyl-1,2-di-(9Z-octadecenoyl)-sn-glycero-3-phosphoethanolamine + H2O = N-tetradecanoylethanolamine + 1,2-di-(9Z-octadecenoyl)-sn-glycero-3-phosphate + H(+). The enzyme catalyses N-hexadecanoyl-1,2-di-(9Z-octadecenoyl)-sn-glycero-3-phosphoethanolamine + H2O = N-hexadecanoylethanolamine + 1,2-di-(9Z-octadecenoyl)-sn-glycero-3-phosphate + H(+). It catalyses the reaction N,1-dihexadecanoyl-2-(9Z,12Z-octadecadienoyl)-sn-glycero-3-phosphoethanolamine + H2O = 1-hexadecanoyl-2-(9Z,12Z-octadecadienoyl)-sn-glycero-3-phosphate + N-hexadecanoylethanolamine + H(+). It carries out the reaction N-octadecanoyl-1,2-di-(9Z-octadecenoyl)-sn-glycero-3-phosphoethanolamine + H2O = N-octadecanoyl ethanolamine + 1,2-di-(9Z-octadecenoyl)-sn-glycero-3-phosphate + H(+). The catalysed reaction is N,1,2-tri-(9Z-octadecenoyl)-sn-glycero-3-phosphoethanolamine + H2O = N-(9Z-octadecenoyl) ethanolamine + 1,2-di-(9Z-octadecenoyl)-sn-glycero-3-phosphate + H(+). The enzyme catalyses N-(5Z,8Z,11Z,14Z-eicosatetraenoyl)-1,2-diacyl-sn-glycero-3-phosphoethanolamine + H2O = N-(5Z,8Z,11Z,14Z-eicosatetraenoyl)-ethanolamine + a 1,2-diacyl-sn-glycero-3-phosphate + H(+). It catalyses the reaction N-(5Z,8Z,11Z,14Z-eicosatetraenoyl)-1,2-di-(9Z-octadecenoyl)-sn-glycero-3-phosphoethanolamine + H2O = N-(5Z,8Z,11Z,14Z-eicosatetraenoyl)-ethanolamine + 1,2-di-(9Z-octadecenoyl)-sn-glycero-3-phosphate + H(+). It carries out the reaction 1-O-(1Z-octadecenoyl)-2-(9Z-octadecenoyl)-sn-glycero-3-phospho-N-hexadecanoyl-ethanolamine + H2O = 1-O-(1Z-octadecenoyl)-2-(9Z-octadecenoyl)-sn-glycero-3-phosphate + N-hexadecanoylethanolamine + H(+). The catalysed reaction is N,1-diacyl-sn-glycero-3-phosphoethanolamine + H2O = an N-acylethanolamine + a 1-acyl-sn-glycero-3-phosphate + H(+). The enzyme catalyses N,1-dihexadecanoyl-sn-glycero-3-phosphoethanolamine + H2O = N-hexadecanoylethanolamine + 1-hexadecanoyl-sn-glycero-3-phosphate + H(+). It catalyses the reaction N-(5Z,8Z,11Z,14Z-eicosatetraenoyl)-1-(9Z-octadecenoyl)-sn-glycero-3-phosphoethanolamine + H2O = N-(5Z,8Z,11Z,14Z-eicosatetraenoyl)-ethanolamine + 1-(9Z-octadecenoyl)-sn-glycero-3-phosphate + H(+). Its activity is regulated as follows. Activated by divalent cations. Activated by bile acids. Functionally, D-type phospholipase that hydrolyzes N-acyl-phosphatidylethanolamines (NAPEs) to produce bioactive N-acylethanolamines/fatty acid ethanolamides (NAEs/FAEs) and phosphatidic acid. Cleaves the terminal phosphodiester bond of diacyl- and alkenylacyl-NAPEs, primarily playing a role in the generation of long-chain saturated and monounsaturated NAEs in the brain. May control NAPE homeostasis in dopaminergic neuron membranes and regulate neuron survival, partly through RAC1 activation. As a regulator of lipid metabolism in the adipose tissue, mediates the crosstalk between adipocytes, gut microbiota and immune cells to control body temperature and weight. In particular, regulates energy homeostasis by promoting cold-induced brown or beige adipocyte differentiation program to generate heat from fatty acids and glucose. Has limited D-type phospholipase activity toward N-acyl lyso-NAPEs. The sequence is that of N-acyl-phosphatidylethanolamine-hydrolyzing phospholipase D (NAPEPLD) from Pongo abelii (Sumatran orangutan).